Consider the following 68-residue polypeptide: Glu S.griseus protease inhibitor (68 aa).

Serine 1 bears the N-acetylserine mark. Cysteine 3 and cysteine 48 are disulfide-bonded.

This sequence belongs to the protease inhibitor I13 (potato type I serine protease inhibitor) family.

In terms of biological role, competitively inhibits Glu S.griseus protease by forming probably a 1:1 complex. BGIA has no inhibitory activity against 2 other acidic amino acid-specific endopeptidases (S.aureus protease V8 and B.subtilis proteinase), chymotrypsin, trypsin, pancreatic elastase, and papain, although subtilisin Carlsberg was strongly inhibited. This chain is Glu S.griseus protease inhibitor, found in Momordica charantia (Bitter gourd).